The primary structure comprises 155 residues: Protein SprT-like (155 aa).

The 139-residue stretch at 7–145 (QRHMEEVSLQ…GSCGGKLIQT (139 aa)) folds into the SprT-like domain. Histidine 67 contacts Zn(2+). Glutamate 68 is an active-site residue. Residue histidine 71 participates in Zn(2+) binding.

The protein belongs to the SprT family. Zn(2+) serves as cofactor.

The protein localises to the cytoplasm. The protein is Protein SprT-like of Listeria monocytogenes serotype 4b (strain CLIP80459).